Reading from the N-terminus, the 172-residue chain is Adenine phosphoribosyltransferase (172 aa).

Belongs to the purine/pyrimidine phosphoribosyltransferase family. As to quaternary structure, homodimer.

Its subcellular location is the cytoplasm. The enzyme catalyses AMP + diphosphate = 5-phospho-alpha-D-ribose 1-diphosphate + adenine. Its pathway is purine metabolism; AMP biosynthesis via salvage pathway; AMP from adenine: step 1/1. Functionally, catalyzes a salvage reaction resulting in the formation of AMP, that is energically less costly than de novo synthesis. This Alkaliphilus oremlandii (strain OhILAs) (Clostridium oremlandii (strain OhILAs)) protein is Adenine phosphoribosyltransferase.